The following is a 153-amino-acid chain: Mediator of RNA polymerase II transcription subunit 22 (153 aa).

The protein belongs to the Mediator complex subunit 22 family. Component of the Mediator complex.

Its subcellular location is the nucleus. Functionally, component of the Mediator complex, a coactivator involved in the regulated transcription of nearly all RNA polymerase II-dependent genes. Mediator functions as a bridge to convey information from gene-specific regulatory proteins to the basal RNA polymerase II transcription machinery. Mediator is recruited to promoters by direct interactions with regulatory proteins and serves as a scaffold for the assembly of a functional preinitiation complex with RNA polymerase II and the general transcription factors. In Caenorhabditis briggsae, this protein is Mediator of RNA polymerase II transcription subunit 22 (mdt-22).